A 454-amino-acid chain; its full sequence is Enolase (454 aa).

Gln-167 is a binding site for (2R)-2-phosphoglycerate. Glu-209 acts as the Proton donor in catalysis. 3 residues coordinate Mg(2+): Asp-250, Glu-312, and Asp-339. Residues Lys-364, Arg-393, Ser-394, and Lys-415 each coordinate (2R)-2-phosphoglycerate. Catalysis depends on Lys-364, which acts as the Proton acceptor.

This sequence belongs to the enolase family. Mg(2+) is required as a cofactor.

It is found in the cytoplasm. The protein localises to the secreted. Its subcellular location is the cell surface. It carries out the reaction (2R)-2-phosphoglycerate = phosphoenolpyruvate + H2O. It functions in the pathway carbohydrate degradation; glycolysis; pyruvate from D-glyceraldehyde 3-phosphate: step 4/5. Functionally, catalyzes the reversible conversion of 2-phosphoglycerate (2-PG) into phosphoenolpyruvate (PEP). It is essential for the degradation of carbohydrates via glycolysis. The protein is Enolase of Mycoplasmopsis agalactiae (strain NCTC 10123 / CIP 59.7 / PG2) (Mycoplasma agalactiae).